The chain runs to 60 residues: Myrmicitoxin(1)-Pr4b (60 aa).

The N-terminal stretch at 1–23 (MKAIIFLFAVLTVVAIIIPIISG) is a signal peptide. Residues 24–33 (EPNAGPHAAS) constitute a propeptide that is removed on maturation. Q59 is subject to Glutamine amide.

It belongs to the formicidae venom clade 2 family. Expressed by the venom gland.

The protein resides in the secreted. In terms of biological role, toxin that causes a rapid and irreversible paralysis when intrathoracically injected into insects (blowflies). Does not cause spontaneous nocifensive behaviors by intraplantar injection in mice. The chain is Myrmicitoxin(1)-Pr4b from Pogonomyrmex rugosus (Desert harvester ant).